The chain runs to 346 residues: Methylthioribose-1-phosphate isomerase (346 aa).

Residues 54–56, R91, and Q192 each bind substrate; that span reads RGA. D233 serves as the catalytic Proton donor. 243-244 contacts substrate; the sequence is NK.

The protein belongs to the eIF-2B alpha/beta/delta subunits family. MtnA subfamily.

It catalyses the reaction 5-(methylsulfanyl)-alpha-D-ribose 1-phosphate = 5-(methylsulfanyl)-D-ribulose 1-phosphate. It functions in the pathway amino-acid biosynthesis; L-methionine biosynthesis via salvage pathway; L-methionine from S-methyl-5-thio-alpha-D-ribose 1-phosphate: step 1/6. Catalyzes the interconversion of methylthioribose-1-phosphate (MTR-1-P) into methylthioribulose-1-phosphate (MTRu-1-P). The polypeptide is Methylthioribose-1-phosphate isomerase (Yersinia pseudotuberculosis serotype O:1b (strain IP 31758)).